The following is a 490-amino-acid chain: NAI2-like protein (490 aa).

A signal peptide spans 1 to 24; the sequence is MGRKYVVLGLAVCLFLSSFNEVSC. 2 disordered regions span residues 43 to 83 and 155 to 206; these read EEGE…VDKF and AATN…FNKG. The stretch at 136 to 163 forms a coiled coil; sequence IADERRQRLEDIERKLKAAAATNIVVED. The segment covering 171–183 has biased composition (basic and acidic residues); sequence KVEETQEVVKFES. A compositionally biased stretch (low complexity) spans 184–199; it reads ESSSASSESRRQSSSS. Residues 433–465 adopt a coiled-coil conformation; it reads TFEKTVANLSRVIEEASQAYEEYHVVVRKWKEE.

In Arabidopsis thaliana (Mouse-ear cress), this protein is NAI2-like protein.